A 467-amino-acid polypeptide reads, in one-letter code: Sexual differentiation process putative subtilase-type proteinase isp6 (467 aa).

The Inhibitor I9 domain occupies 86–176 (YIIVLQPDLS…AVERDQVVSI (91 aa)). Residues 186-467 (PWGLARISHK…NLLAFNGAQE (282 aa)) form the Peptidase S8 domain. Active-site charge relay system residues include aspartate 221, histidine 253, and serine 409.

This sequence belongs to the peptidase S8 family.

In Schizosaccharomyces pombe (strain 972 / ATCC 24843) (Fission yeast), this protein is Sexual differentiation process putative subtilase-type proteinase isp6 (isp6).